Consider the following 176-residue polypeptide: Adenine phosphoribosyltransferase (176 aa).

This sequence belongs to the purine/pyrimidine phosphoribosyltransferase family. In terms of assembly, homodimer.

It localises to the cytoplasm. It carries out the reaction AMP + diphosphate = 5-phospho-alpha-D-ribose 1-diphosphate + adenine. It participates in purine metabolism; AMP biosynthesis via salvage pathway; AMP from adenine: step 1/1. Catalyzes a salvage reaction resulting in the formation of AMP, that is energically less costly than de novo synthesis. This is Adenine phosphoribosyltransferase from Gluconacetobacter diazotrophicus (strain ATCC 49037 / DSM 5601 / CCUG 37298 / CIP 103539 / LMG 7603 / PAl5).